Consider the following 353-residue polypeptide: MAVSAIGFEGFEKRLEISFSDPGLFSDPQGRGLRSLTKSQLDEILAPAECTIVSSLANEDVDSYVLSESSLFVYAYKIIIKTCGTTKLLLAIPPILKLAESISLDVRAVRYTRGSFIFPGAQSFPHRHFSEEVAVLDGFFGKLGSGSKAYIMGGSDEAQNWHVYCASADSVSPADSVYTLEMCMTGLDREKASVFFKQQTGSAAEMTVNSGIRKILPNSEICDFDFEPCGYSMNSVEGPAVSTIHITPEDGFSYASFETAGYDLKAMNLNEMVMRVLACFQPTEFSVAVHVDNASKSFEQGCLLDVKGYCCDEKSHQGLGMSGSVVYQKFVKASDCGSPRSTLKCWKDEDEEE.

Active-site residues include E9 and E12. The active-site Schiff-base intermediate with substrate; via pyruvic acid is S69. S69 is modified (pyruvic acid (Ser); by autocatalysis). The Proton donor; for catalytic activity role is filled by C83. Catalysis depends on proton acceptor; for processing activity residues S232 and H245.

This sequence belongs to the eukaryotic AdoMetDC family. Pyruvate is required as a cofactor. Is synthesized initially as an inactive proenzyme. Formation of the active enzyme involves a self-maturation process in which the active site pyruvoyl group is generated from an internal serine residue via an autocatalytic post-translational modification. Two non-identical subunits are generated from the proenzyme in this reaction, and the pyruvate is formed at the N-terminus of the alpha chain, which is derived from the carboxyl end of the proenzyme. The post-translation cleavage follows an unusual pathway, termed non-hydrolytic serinolysis, in which the side chain hydroxyl group of the serine supplies its oxygen atom to form the C-terminus of the beta chain, while the remainder of the serine residue undergoes an oxidative deamination to produce ammonia and the pyruvoyl group blocking the N-terminus of the alpha chain.

The enzyme catalyses S-adenosyl-L-methionine + H(+) = S-adenosyl 3-(methylsulfanyl)propylamine + CO2. The protein operates within amine and polyamine biosynthesis; S-adenosylmethioninamine biosynthesis; S-adenosylmethioninamine from S-adenosyl-L-methionine: step 1/1. This Vicia faba (Broad bean) protein is S-adenosylmethionine decarboxylase proenzyme (SAMDC).